The following is a 228-amino-acid chain: Movement and silencing protein TGBp1 (228 aa).

Positions Met1–Leu132 constitute a (+)RNA virus helicase ATP-binding domain. In terms of domain architecture, (+)RNA virus helicase C-terminal spans Ser133–Ser228.

It belongs to the Tymovirales TGBp1 protein family. As to quaternary structure, homodimer and homooligomer. Interacts with capsid protein. Interacts with host AGO1; this interaction targets the host protein for degradation, thereby suppressing the antiviral RNA silencing.

The protein localises to the host cytoplasm. Transports viral genome to neighboring plant cells directly through plasmosdesmata, without any budding. The movement protein allows efficient cell to cell propagation, by bypassing the host cell wall barrier. Increases plasmodesma size exclusion limit. Acts as a suppressor of RNA-mediated gene silencing, also known as post-transcriptional gene silencing (PTGS), a mechanism of plant viral defense that limits the accumulation of viral RNAs. This is Movement and silencing protein TGBp1 from Lilium (LSV).